Consider the following 93-residue polypeptide: Small ribosomal subunit protein uS19 (93 aa).

It belongs to the universal ribosomal protein uS19 family.

Its function is as follows. Protein S19 forms a complex with S13 that binds strongly to the 16S ribosomal RNA. The protein is Small ribosomal subunit protein uS19 of Paenarthrobacter aurescens (strain TC1).